Consider the following 50-residue polypeptide: uncharacterized protein (50 aa).

Positions 1–22 (MSKVAALGWGTLVYLGVGLLLA) are cleaved as a signal peptide.

This is an uncharacterized protein from Dictyostelium discoideum (Social amoeba).